Reading from the N-terminus, the 215-residue chain is UPF0502 protein YceH (215 aa).

Position 80 is an N6-acetyllysine (Lys80).

It belongs to the UPF0502 family.

The sequence is that of UPF0502 protein YceH from Shigella boydii serotype 4 (strain Sb227).